Here is a 427-residue protein sequence, read N- to C-terminus: Trigger factor (427 aa).

The region spanning 163–248 is the PPIase FKBP-type domain; that stretch reads GDTVILDFEG…LHEIKTKEVP (86 aa).

Belongs to the FKBP-type PPIase family. Tig subfamily.

Its subcellular location is the cytoplasm. The enzyme catalyses [protein]-peptidylproline (omega=180) = [protein]-peptidylproline (omega=0). Functionally, involved in protein export. Acts as a chaperone by maintaining the newly synthesized protein in an open conformation. Functions as a peptidyl-prolyl cis-trans isomerase. The sequence is that of Trigger factor from Listeria monocytogenes serotype 4a (strain HCC23).